The chain runs to 176 residues: Large ribosomal subunit protein bL17m (176 aa).

A mitochondrion-targeting transit peptide spans 1-8 (MRLSLAAA).

The protein belongs to the bacterial ribosomal protein bL17 family. In terms of assembly, component of the mitochondrial ribosome large subunit (39S) which comprises a 16S rRNA and about 50 distinct proteins.

Its subcellular location is the mitochondrion. The chain is Large ribosomal subunit protein bL17m (Mrpl17) from Mus musculus (Mouse).